Consider the following 478-residue polypeptide: tRNA modification GTPase MnmE (478 aa).

(6S)-5-formyl-5,6,7,8-tetrahydrofolate-binding residues include Arg25, Glu82, and Lys135. A TrmE-type G domain is found at 231–400; that stretch reads GIKVVIAGQP…LREQLLRVVG (170 aa). Asn241 contributes to the K(+) binding site. Residues 241–246, 260–266, and 285–288 each bind GTP; these read NVGKSS, TPVAGTT, and DTAG. Ser245 provides a ligand contact to Mg(2+). Positions 260, 262, and 265 each coordinate K(+). Thr266 is a Mg(2+) binding site. (6S)-5-formyl-5,6,7,8-tetrahydrofolate is bound at residue Lys478.

Belongs to the TRAFAC class TrmE-Era-EngA-EngB-Septin-like GTPase superfamily. TrmE GTPase family. In terms of assembly, homodimer. Heterotetramer of two MnmE and two MnmG subunits. K(+) serves as cofactor.

It is found in the cytoplasm. Its function is as follows. Exhibits a very high intrinsic GTPase hydrolysis rate. Involved in the addition of a carboxymethylaminomethyl (cmnm) group at the wobble position (U34) of certain tRNAs, forming tRNA-cmnm(5)s(2)U34. This is tRNA modification GTPase MnmE from Polaromonas naphthalenivorans (strain CJ2).